A 670-amino-acid polypeptide reads, in one-letter code: Extracellular matrix protein 2 (670 aa).

The first 19 residues, 1–19, serve as a signal peptide directing secretion; the sequence is MKLAVLFCFILLIVLQTDC. A VWFC domain is found at 96-153; sequence GYCFVKGMIMYNKAVWSPEPCTTCLCSNGRVLCDETECHPKACPYTIKPEGECCPICS. The interval 185–270 is disordered; sequence SEEDEEIAEG…EEDAIRGDVF (86 aa). Over residues 192–227 the composition is skewed to basic and acidic residues; it reads AEGHKEHKKETSVPTKIHGDGERTERKLRPEKEGRS. Positions 241 to 263 are enriched in acidic residues; sequence ESKEETEREGEEEEEEEEEEEED. The Cell attachment site signature appears at 266 to 268; it reads RGD. The LRRNT domain maps to 278 to 315; it reads PGTPRGRPRLPRSCSLSYRTISCVHADFTEIPPITAPE. LRR repeat units follow at residues 339-359, 365-386, 387-407, 410-430, 436-456, 457-478, 481-501, 507-528, 529-549, 553-573, 580-601, 603-624, and 632-655; these read NLER…GPKA, KLMR…LPST, LEEL…SLSD, QLVT…DPLA, SLSY…GLPA, STEE…CFNH, KITM…APLA, NLES…LPKS, LLHL…VFGH, GLEY…DLVS, SLRE…IQDM, ALHF…QICN, and ALEH…AFSC. N-linked (GlcNAc...) asparagine glycosylation occurs at Asn349. Asn420 carries N-linked (GlcNAc...) asparagine glycosylation. N-linked (GlcNAc...) asparagine glycosylation is present at Asn477.

This sequence belongs to the small leucine-rich proteoglycan (SLRP) family. SLRP class I subfamily. Interacts with numerous extracellular matrix proteins. Interacts with isoform 1 of MSL1. Interacts with isoform 3 of RASSF1.

It is found in the secreted. The protein resides in the extracellular space. Its subcellular location is the extracellular matrix. Functionally, promotes matrix assembly and cell adhesiveness. This is Extracellular matrix protein 2 (Ecm2) from Mus musculus (Mouse).